The following is a 634-amino-acid chain: Pentatricopeptide repeat-containing protein At5g14080 (634 aa).

13 PPR repeats span residues 81–115 (DSISYHSIFKSLSLSRQFSAMDALFKQVKSNKILL), 116–150 (DSSVYRSLIDTLVLGRKAQSAFWVLEEAFSTGQEI), 151–185 (HPDVCNRLLAGLTSDGCYDYAQKLFVKMRHKGVSL), 186–220 (NTLGFGVYIGWFCRSSETNQLLRLVDEVKKANLNI), 222–256 (GSIIALLILHSLCKCSREMDAFYILEELRNIDCKP), 257–291 (DFMAYRVIAEAFVVTGNLYERQVVLKKKRKLGVAP), 292–326 (RSSDYRAFILDLISAKRLTEAKEVAEVIVSGKFPM), 327–360 (DNDILDALIGSVSAVDPDSAVEFLVYMVSTGKLP), 361–395 (AIRTLSKLSKNLCRHDKSDHLIKAYELLSSKGYFS), 396–430 (ELQSYSLMISFLCKAGRVRESYTALQEMKKEGLAP), 431–465 (DVSLYNALIEACCKAEMIRPAKKLWDEMFVEGCKM), 466–500 (NLTTYNVLIRKLSEEGEAEESLRLFDKMLERGIEP), and 501–535 (DETIYMSLIEGLCKETKIEAAMEVFRKCMERDHKT).

Belongs to the PPR family. P subfamily.

This Arabidopsis thaliana (Mouse-ear cress) protein is Pentatricopeptide repeat-containing protein At5g14080.